A 219-amino-acid chain; its full sequence is Protein-L-isoaspartate O-methyltransferase 2 (219 aa).

Serine 60 is a catalytic residue.

This sequence belongs to the methyltransferase superfamily. L-isoaspartyl/D-aspartyl protein methyltransferase family.

It is found in the cytoplasm. It carries out the reaction [protein]-L-isoaspartate + S-adenosyl-L-methionine = [protein]-L-isoaspartate alpha-methyl ester + S-adenosyl-L-homocysteine. Its function is as follows. Catalyzes the methyl esterification of L-isoaspartyl residues in peptides and proteins that result from spontaneous decomposition of normal L-aspartyl and L-asparaginyl residues. It plays a role in the repair and/or degradation of damaged proteins. The chain is Protein-L-isoaspartate O-methyltransferase 2 (pcm2) from Archaeoglobus fulgidus (strain ATCC 49558 / DSM 4304 / JCM 9628 / NBRC 100126 / VC-16).